A 129-amino-acid chain; its full sequence is uncharacterized protein (129 aa).

The interval 23 to 101 (KASTSSESCQ…TAATRTTSKK (79 aa)) is disordered. Composition is skewed to basic and acidic residues over residues 31–40 (CQRRGVRDDT) and 67–80 (EGDR…EKEP).

This is an uncharacterized protein from Ictaluridae (bullhead catfishes).